A 1116-amino-acid chain; its full sequence is Error-prone DNA polymerase 1 (1116 aa).

Belongs to the DNA polymerase type-C family. DnaE2 subfamily.

It localises to the cytoplasm. It carries out the reaction DNA(n) + a 2'-deoxyribonucleoside 5'-triphosphate = DNA(n+1) + diphosphate. Functionally, DNA polymerase involved in damage-induced mutagenesis and translesion synthesis (TLS). It is not the major replicative DNA polymerase. This chain is Error-prone DNA polymerase 1, found in Rhizobium meliloti (strain 1021) (Ensifer meliloti).